We begin with the raw amino-acid sequence, 102 residues long: Co-chaperonin GroES (102 aa).

Belongs to the GroES chaperonin family. Heptamer of 7 subunits arranged in a ring. Interacts with the chaperonin GroEL.

It localises to the cytoplasm. Together with the chaperonin GroEL, plays an essential role in assisting protein folding. The GroEL-GroES system forms a nano-cage that allows encapsulation of the non-native substrate proteins and provides a physical environment optimized to promote and accelerate protein folding. GroES binds to the apical surface of the GroEL ring, thereby capping the opening of the GroEL channel. This Chlamydia caviae (strain ATCC VR-813 / DSM 19441 / 03DC25 / GPIC) (Chlamydophila caviae) protein is Co-chaperonin GroES.